The following is a 1378-amino-acid chain: DNA-directed RNA polymerase subunit beta (1378 aa).

This sequence belongs to the RNA polymerase beta chain family. In terms of assembly, the RNAP catalytic core consists of 2 alpha, 1 beta, 1 beta' and 1 omega subunit. When a sigma factor is associated with the core the holoenzyme is formed, which can initiate transcription.

The catalysed reaction is RNA(n) + a ribonucleoside 5'-triphosphate = RNA(n+1) + diphosphate. Functionally, DNA-dependent RNA polymerase catalyzes the transcription of DNA into RNA using the four ribonucleoside triphosphates as substrates. The sequence is that of DNA-directed RNA polymerase subunit beta from Roseobacter denitrificans (strain ATCC 33942 / OCh 114) (Erythrobacter sp. (strain OCh 114)).